A 501-amino-acid chain; its full sequence is 25-hydroxyvitamin D-1 alpha hydroxylase, mitochondrial (501 aa).

Cys448 is a binding site for heme.

Belongs to the cytochrome P450 family. Heme is required as a cofactor. In terms of tissue distribution, kidney.

It is found in the mitochondrion membrane. It carries out the reaction calcidiol + 2 reduced [adrenodoxin] + O2 + 2 H(+) = calcitriol + 2 oxidized [adrenodoxin] + H2O. The catalysed reaction is secalciferol + 2 reduced [adrenodoxin] + O2 + 2 H(+) = calcitetrol + 2 oxidized [adrenodoxin] + H2O. Its pathway is hormone biosynthesis; cholecalciferol biosynthesis. In terms of biological role, catalyzes the conversion of 25-hydroxyvitamin D3 (25(OH)D3) to 1-alpha,25-dihydroxyvitamin D3 (1alpha,25(OH)(2)D3), and of 24,25-dihydroxyvitamin D3 (24,25(OH)(2)D3) to 1-alpha,24,25-trihydroxyvitamin D3 (1alpha,24,25(OH)(3)D3). Is also active with 25-hydroxy-24-oxo-vitamin D3. Plays an important role in normal bone growth, calcium metabolism, and tissue differentiation. This chain is 25-hydroxyvitamin D-1 alpha hydroxylase, mitochondrial (Cyp27b1), found in Rattus norvegicus (Rat).